The primary structure comprises 266 residues: Signal peptidase I (266 aa).

Topologically, residues 1–20 (MQTDNTKSNTNKTAKQEWGS) are cytoplasmic. Residues 21–41 (FVFVICIALLIRILIMEPFTV) traverse the membrane as a helical segment. Over 42–266 (PTGSMKATIL…IFRNLYNTDV (225 aa)) the chain is Periplasmic. Catalysis depends on residues S45 and K108.

Belongs to the peptidase S26 family.

Its subcellular location is the cell inner membrane. It carries out the reaction Cleavage of hydrophobic, N-terminal signal or leader sequences from secreted and periplasmic proteins.. The sequence is that of Signal peptidase I (lepB) from Rickettsia massiliae (strain Mtu5).